Reading from the N-terminus, the 103-residue chain is Flagellar hook-basal body complex protein FliE (103 aa).

It belongs to the FliE family.

The protein resides in the bacterial flagellum basal body. The polypeptide is Flagellar hook-basal body complex protein FliE (Photorhabdus laumondii subsp. laumondii (strain DSM 15139 / CIP 105565 / TT01) (Photorhabdus luminescens subsp. laumondii)).